We begin with the raw amino-acid sequence, 98 residues long: Large ribosomal subunit protein uL23 (98 aa).

The protein belongs to the universal ribosomal protein uL23 family. As to quaternary structure, part of the 50S ribosomal subunit. Contacts protein L29, and trigger factor when it is bound to the ribosome.

Functionally, one of the early assembly proteins it binds 23S rRNA. One of the proteins that surrounds the polypeptide exit tunnel on the outside of the ribosome. Forms the main docking site for trigger factor binding to the ribosome. This chain is Large ribosomal subunit protein uL23, found in Rickettsia felis (strain ATCC VR-1525 / URRWXCal2) (Rickettsia azadi).